A 286-amino-acid chain; its full sequence is KH domain-containing protein At2g38610 (286 aa).

At Ser-2 the chain carries N-acetylserine. One can recognise a KH domain in the interval 141-208 (EIPVDNYPNF…EHLNEQLHIL (68 aa)). The disordered stretch occupies residues 256–286 (SNNLREESPGPSGGGSVSPFNSSGKRPKTGC). Ser-263 and Ser-273 each carry phosphoserine.

It localises to the nucleus. The polypeptide is KH domain-containing protein At2g38610 (Arabidopsis thaliana (Mouse-ear cress)).